Reading from the N-terminus, the 511-residue chain is Xylose import ATP-binding protein XylG (511 aa).

ABC transporter domains lie at 6–244 (LEMR…VGRE) and 261–506 (FEAR…IGKP). 38–45 (GENGAGKS) serves as a coordination point for ATP.

This sequence belongs to the ABC transporter superfamily. Xylose importer (TC 3.A.1.2.4) family. The complex is composed of two ATP-binding proteins (XylG), two transmembrane proteins (XylH) and a solute-binding protein (XylF).

It localises to the cell inner membrane. It carries out the reaction D-xylose(out) + ATP + H2O = D-xylose(in) + ADP + phosphate + H(+). In terms of biological role, part of the ABC transporter complex XylFGH involved in xylose import. Responsible for energy coupling to the transport system. The sequence is that of Xylose import ATP-binding protein XylG from Brucella abortus (strain 2308).